The primary structure comprises 116 residues: Small ribosomal subunit protein bS16 (116 aa).

It belongs to the bacterial ribosomal protein bS16 family.

The protein is Small ribosomal subunit protein bS16 of Chlamydia trachomatis serovar A (strain ATCC VR-571B / DSM 19440 / HAR-13).